The chain runs to 717 residues: Coupling protein TraD (717 aa).

The Cytoplasmic segment spans residues 1 to 27 (MSFNAKDMTQGGQIASMRIRMFSQIAN). Residues 28 to 47 (IMLYCLFIFFWILVGLVLWI) form a helical membrane-spanning segment. The Periplasmic portion of the chain corresponds to 48-104 (KISWQTFVNGCIYWWCTTLEGMRDLIKSQPVYEIQYYGKTFRMNAAQVLHDKYMIWC). Residues 105–130 (SEQLWSAFVLAAVVALVICLITFFVV) form a helical membrane-spanning segment. The Cytoplasmic segment spans residues 131–717 (SWILGRQGKQ…GEDVEPGDDF (587 aa)). 192-199 (GTVGAGKS) provides a ligand contact to ATP. 2 disordered regions span residues 614–639 (EDVTQAEQPQQPVSPAINDKKSDSGV) and 650–669 (LKMKPEEEMEQQLPPGISES).

This sequence belongs to the TrwB coupling protein family. In terms of assembly, interacts with relaxosome component TraM. May form a hexamer in the membrane.

It localises to the cell inner membrane. Its function is as follows. Conjugative DNA transfer (CDT) is the unidirectional transfer of ssDNA plasmid from a donor to a recipient cell. It is the central mechanism by which antibiotic resistance and virulence factors are propagated in bacterial populations. Couples the transferosome to a type IV secretion system. Probably forms a pore through which single-stranded plasmid DNA is transferred to the secretion system. The last 37 residues are important for determining plasmid specificity and transfer efficiency, with additional specificity conferred by the TraD-TraM pair. The polypeptide is Coupling protein TraD (traD) (Escherichia coli (strain K12)).